We begin with the raw amino-acid sequence, 1368 residues long: Protein suppressor 2 of zeste (1368 aa).

Residues 35–74 form an RING-type zinc finger; it reads CRLCRGYMIDPTTVDYCYHTYCRSCILKHLLRAVYCPECK. 10 disordered regions span residues 245 to 321, 448 to 628, 640 to 718, 861 to 903, 935 to 1001, 1057 to 1103, 1116 to 1141, 1161 to 1193, 1211 to 1271, and 1298 to 1322; these read SRIN…FKSL, QPLQ…QQQQ, TLPT…AVPQ, AGGK…KRSC, ALSG…NGTA, SANP…STSN, ISANSNGGPSTTSGSNSNGTTNGDDL, AASSGNGSGSTSSSSAKPKNANALVRPQNASVR, STAA…KKPT, and VLSSNAAKSPELAKTTTAVALRPEP. Positions 449–461 are enriched in polar residues; that stretch reads PLQQSASNPDSKY. Residues 462–495 show a composition bias toward low complexity; that stretch reads SPNASPMSSCSSSTNGSSSSLGTADASTSTSTSS. Positions 496–506 are enriched in basic residues; the sequence is SHRKRKKKHSK. 2 stretches are compositionally biased toward low complexity: residues 599–628 and 672–689; these read AEPEQQQQQQQQQQQPQQQQQQQQQQQQQQ and PKQQQQQMPQQPQAVLQQ. 2 stretches are compositionally biased toward polar residues: residues 936–953 and 962–977; these read LSGQRNNKGNSSNSNAYR and LRNTAAPQHSFPSKSS. Composition is skewed to low complexity over residues 1078 to 1099, 1119 to 1138, 1161 to 1183, and 1231 to 1263; these read NNNNNNNNNNNNNNNNNNNNNN, NSNGGPSTTSGSNSNGTTNG, AASSGNGSGSTSSSSAKPKNANA, and STSNPGSLSPTNTSSSSSSSSSGSSGCSAATSP.

The protein localises to the nucleus. Its function is as follows. Regulates expression of the homeotic selector genes by influencing higher-order chromatin structure through interaction with other proteins. The polypeptide is Protein suppressor 2 of zeste (Su(z)2) (Drosophila melanogaster (Fruit fly)).